A 160-amino-acid polypeptide reads, in one-letter code: uncharacterized protein (160 aa).

Basic and acidic residues predominate over residues 1 to 31 (METEKPNTDVKVAQDLEKLKLDEKHKDEKKD). A disordered region spans residues 1 to 160 (METEKPNTDV…DKKDKEHKKE (160 aa)). Residues 20-111 (KLDEKHKDEK…KSKLEGKKDK (92 aa)) are a coiled coil. A compositionally biased stretch (basic residues) spans 32–42 (KKDKKDKKDKK). The segment covering 43-160 (DKKEKTPEEI…DKKDKEHKKE (118 aa)) has biased composition (basic and acidic residues).

This is an uncharacterized protein from Dictyostelium discoideum (Social amoeba).